The following is a 406-amino-acid chain: MDGWRRMPRWGLLLLLWGSCTFGLPTDTTTFKRIFLKRMPSIRESLKERGVDMARLGPEWSQPMKRLTLGNTTSSVILTNYMDTQYYGEIGIGTPPQTFKVVFDTGSSNVWVPSSKCSRLYTACVYHKLFDASDSSSYKHNGTELTLRYSTGTVSGFLSQDIITVGGITVTQMFGEVTEMPALPFMLAEFDGVVGMGFIEQAIGRVTPIFDNIISQGVLKEDVFSFYYNRDSENSQSLGGQIVLGGSDPQHYEGNFHYINLIKTGVWQIQMKGVSVGSSTLLCEDGCLALVDTGASYISGSTSSIEKLMEALGAKKRLFDYVVKCNEGPTLPDISFHLGGKEYTLTSADYVFQESYSSKKLCTLAIHAMDIPPPTGPTWALGATFIRKFYTEFDRRNNRIGFALAR.

The N-terminal stretch at 1–23 (MDGWRRMPRWGLLLLLWGSCTFG) is a signal peptide. A propeptide spans 24 to 66 (LPTDTTTFKRIFLKRMPSIRESLKERGVDMARLGPEWSQPMKR) (activation peptide). Asn71 carries N-linked (GlcNAc...) asparagine glycosylation. The Peptidase A1 domain occupies 86-403 (YYGEIGIGTP…DRRNNRIGFA (318 aa)). Asp104 is an active-site residue. The cysteines at positions 117 and 124 are disulfide-linked. N-linked (GlcNAc...) asparagine glycosylation occurs at Asn141. Cys283 and Cys287 form a disulfide bridge. The active site involves Asp292. A disulfide bridge connects residues Cys325 and Cys362.

Belongs to the peptidase A1 family. Interacts with ATP6AP2.

The protein resides in the secreted. Its subcellular location is the membrane. It carries out the reaction Cleavage of Leu-|-Xaa bond in angiotensinogen to generate angiotensin I.. Interaction with ATP6AP2 results in a 5-fold increased efficiency in angiotensinogen processing. In terms of biological role, renin is a highly specific endopeptidase, whose only known function is to generate angiotensin I from angiotensinogen in the plasma, initiating a cascade of reactions that produce an elevation of blood pressure and increased sodium retention by the kidney. This is Renin (REN) from Homo sapiens (Human).